Consider the following 1054-residue polypeptide: Isoleucine--tRNA ligase (1054 aa).

A 'HIGH' region motif is present at residues 58–68 (PFANGLPHYGH). Residues 627-631 (KMSKS) carry the 'KMSKS' region motif. Lysine 630 lines the ATP pocket.

The protein belongs to the class-I aminoacyl-tRNA synthetase family. IleS type 2 subfamily. In terms of assembly, monomer. Requires Zn(2+) as cofactor.

The protein resides in the cytoplasm. The enzyme catalyses tRNA(Ile) + L-isoleucine + ATP = L-isoleucyl-tRNA(Ile) + AMP + diphosphate. In terms of biological role, catalyzes the attachment of isoleucine to tRNA(Ile). As IleRS can inadvertently accommodate and process structurally similar amino acids such as valine, to avoid such errors it has two additional distinct tRNA(Ile)-dependent editing activities. One activity is designated as 'pretransfer' editing and involves the hydrolysis of activated Val-AMP. The other activity is designated 'posttransfer' editing and involves deacylation of mischarged Val-tRNA(Ile). This is Isoleucine--tRNA ligase from Corynebacterium efficiens (strain DSM 44549 / YS-314 / AJ 12310 / JCM 11189 / NBRC 100395).